We begin with the raw amino-acid sequence, 819 residues long: Nonribosomal peptide synthetase 9 (819 aa).

Residues 202–591 (LQAPTQHAVR…GRKDTQAKIR (390 aa)) form an adenylation (A) domain region. A Carrier domain is found at 722 to 798 (QPRNERERLI…SLAEFLSSSS (77 aa)). Ser-759 carries the O-(pantetheine 4'-phosphoryl)serine modification.

This sequence belongs to the NRP synthetase family.

The protein operates within secondary metabolite biosynthesis. Functionally, nonribosomal peptide synthetase; part of the Fg3_54/C64 gene cluster that mediates the biosynthesis of the octapeptide fusaoctaxin A, a virulence factor that is required for cell-to-cell invasiveness of plant host. The 2 nonribosomal peptide synthetases NRPS9 and NRPS5 form an assembly line which likely utilizes GABA as a starter unit (loaded on the unique module M1 of NRPS9) and sequentially incorporates seven extender units composed of the residues L-Ala, L-allo-Ile, L-Ser, L-Val, L-Ser, L-Leu and L-Leu, respectively. During the process, each of the residues that are tethered on modules M3-M7 of NRPS5 containing an E domain can undergo an epimerization reaction to produce a D-configuration before the transpeptidation reaction occurs. The elongation of the peptidyl chain might be terminated by module M8-mediated L-Leu incorporation, followed by R domain-catalyzed 4 electron reduction to release the resulting octapeptide from the assembly line as an alcohol. Fusaoctaxin A is cleaved by the cluster specific ABC transporter FGM5 to the pentapeptide fusapentaxin A and the tripeptide fusatrixin A. The other enzymes from the cluster, FGM1, FGM2, FGM3 and FGM9 seem not to be involved in the biosynthesis of fusaoctaxin A and their functions have still to be determined. In Gibberella zeae (strain ATCC MYA-4620 / CBS 123657 / FGSC 9075 / NRRL 31084 / PH-1) (Wheat head blight fungus), this protein is Nonribosomal peptide synthetase 9.